Here is a 218-residue protein sequence, read N- to C-terminus: Glutathione S-transferase Mu 1 (218 aa).

The region spanning 2 to 88 (PMILGYWDIR…YIARKHNLCG (87 aa)) is the GST N-terminal domain. Glutathione is bound at residue 7-8 (YW). Position 34 is a phosphothreonine (Thr-34). Residues 43–46 (RSQW), Lys-50, 59–60 (NL), and 72–73 (QS) each bind glutathione. Residues 90-208 (TEEEKIRVDI…KSSRFLPRPV (119 aa)) form the GST C-terminal domain. Tyr-116 is a binding site for substrate. Ser-210 is subject to Phosphoserine.

It belongs to the GST superfamily. Mu family. Homodimer. As to expression, liver (at protein level).

The protein localises to the cytoplasm. The enzyme catalyses RX + glutathione = an S-substituted glutathione + a halide anion + H(+). It carries out the reaction prostaglandin A2 + glutathione = prostaglandin A2-S-(R)-glutathione. It catalyses the reaction prostaglandin J2 + glutathione = prostaglandin J2-S-(R)-glutathione. The catalysed reaction is prostaglandin J2 + glutathione = prostaglandin J2-S-(S)-glutathione. The enzyme catalyses prostaglandin A2 + glutathione = prostaglandin A2-S-(S)-glutathione. It carries out the reaction 11(S)-hydroxy-14(S),15(S)-epoxy-(5Z,8Z,12E)-eicosatrienoate + glutathione = (11S,15S)-dihydroxy-14(R)-S-glutathionyl-(5Z,8Z,12E)-eicosatrienoate. Its function is as follows. Conjugation of reduced glutathione to a wide number of exogenous and endogenous hydrophobic electrophiles. Involved in the formation of glutathione conjugates of both prostaglandin A2 (PGA2) and prostaglandin J2 (PGJ2). Participates in the formation of novel hepoxilin regioisomers. This Homo sapiens (Human) protein is Glutathione S-transferase Mu 1.